We begin with the raw amino-acid sequence, 1482 residues long: Lysine-specific demethylase rbr-2 (1482 aa).

A disordered region spans residues Met1–Met45. Positions Thr11–Thr20 are enriched in low complexity. A compositionally biased stretch (polar residues) spans Asn30–Pro41. Positions Ala61 to Pro102 constitute a JmjN domain. An ARID domain is found at Val126–Lys223. A disordered region spans residues Tyr244–Asn316. A compositionally biased stretch (basic and acidic residues) spans Met251–Glu264. Residues Gly277–Pro288 are compositionally biased toward basic residues. The PHD-type 1 zinc finger occupies Gln322–Ser374. One can recognise a JmjC domain in the interval Gln471–Ser637. Fe cation-binding residues include His517, Asp520, and His605. The PHD-type 2 zinc finger occupies Leu1206 to Gly1260. Residues Gln1361–Gln1403 form a disordered region. The PHD-type 3 zinc finger occupies Phe1416–His1471.

Belongs to the JARID1 histone demethylase family. Requires Fe(2+) as cofactor.

It is found in the nucleus. The enzyme catalyses N(6),N(6),N(6)-trimethyl-L-lysyl(4)-[histone H3] + 3 2-oxoglutarate + 3 O2 = L-lysyl(4)-[histone H3] + 3 formaldehyde + 3 succinate + 3 CO2. Histone demethylase that specifically demethylates 'Lys-4' of histone H3, thereby playing a central role in histone code. Does not demethylate histone H3 'Lys-9', H3 'Lys-27', H3 'Lys-36', H3 'Lys-79' or H4 'Lys-20'. Demethylates trimethylated and dimethylated but not monomethylated H3 'Lys-4'. Involved in larval development and vulva formation. The sequence is that of Lysine-specific demethylase rbr-2 (rbr-2) from Caenorhabditis briggsae.